Consider the following 183-residue polypeptide: Mitochondrial import inner membrane translocase subunit tim17 (183 aa).

The next 3 membrane-spanning stretches (helical) occupy residues 13-33, 57-77, and 107-127; these read AGGAFAIGYVLMGVVNIGLGF, GGNFAIWGSLFSGFDCTLSYI, and VQAAAFGGIFIGIIEAFQHMM. Over residues 131 to 141 the composition is skewed to polar residues; it reads MQAQQEEMTQQ. Residues 131-183 are disordered; it reads MQAQQEEMTQQHLEERKRYEEERKQREGERKKLNENGKSKKNKQQQNGENDLD. A compositionally biased stretch (basic and acidic residues) spans 142–168; sequence HLEERKRYEEERKQREGERKKLNENGK. The segment covering 174–183 has biased composition (low complexity); the sequence is QQQNGENDLD.

This sequence belongs to the Tim17/Tim22/Tim23 family.

Its subcellular location is the mitochondrion inner membrane. Its function is as follows. May be involved in the translocation of transit peptide-containing proteins across the mitochondrial inner membrane. In Dictyostelium discoideum (Social amoeba), this protein is Mitochondrial import inner membrane translocase subunit tim17 (timm17).